We begin with the raw amino-acid sequence, 172 residues long: uncharacterized protein (172 aa).

The Ferritin-like diiron domain occupies 1 to 148 (MANSQKVIDV…TIHDFFENGN (148 aa)).

This is an uncharacterized protein from Ureaplasma urealyticum (Ureaplasma urealyticum biotype 2).